The sequence spans 337 residues: Transcription factor bHLH121 (337 aa).

In terms of domain architecture, bHLH spans 58–108; it reads ARKSQKAGREKLRREKLNEHFVELGNVLDPERPKNDKATILTDTVQLLKEL. A disordered region spans residues 235–337; it reads VHIPQNPGNR…AGGQKPDDAK (103 aa). Basic and acidic residues-rich tracts occupy residues 244–263 and 280–291; these read RSRE…KAED and SDKDTLQRPEKT. Residues 297 to 317 are compositionally biased toward low complexity; sequence NNNNNSIEESSHSSKCSSSPS.

As to quaternary structure, homodimer. As to expression, expressed constitutively in roots, leaves, stems, and flowers.

It localises to the nucleus. The protein is Transcription factor bHLH121 (BHLH121) of Arabidopsis thaliana (Mouse-ear cress).